The chain runs to 115 residues: Arsenic resistance transcriptional regulator ArsR2 (115 aa).

Residues 1-90 enclose the HTH arsR-type domain; it reads MITPPDVFKS…EMLQVTLQAN (90 aa). 2 residues coordinate arsenite: Cys-30 and Cys-32. Positions 31-54 form a DNA-binding region, H-T-H motif; sequence VCELMCALNDSQPKISRHLAQLRS.

In terms of assembly, homodimer.

It is found in the cytoplasm. Its function is as follows. Binds arsenite and regulates the expression of arsenic efflux pumps. In vitro, also binds antimony and bismuth, but not arsenate. The polypeptide is Arsenic resistance transcriptional regulator ArsR2 (Pseudomonas putida (strain ATCC 47054 / DSM 6125 / CFBP 8728 / NCIMB 11950 / KT2440)).